Here is an 81-residue protein sequence, read N- to C-terminus: Sulfur carrier protein TusA (81 aa).

Cys-19 serves as the catalytic Cysteine persulfide intermediate.

The protein belongs to the sulfur carrier protein TusA family.

It localises to the cytoplasm. Sulfur carrier protein which probably makes part of a sulfur-relay system. In Shewanella woodyi (strain ATCC 51908 / MS32), this protein is Sulfur carrier protein TusA.